A 1247-amino-acid polypeptide reads, in one-letter code: E3 ubiquitin-protein ligase hecw-1 (1247 aa).

One can recognise a WW 1 domain in the interval 602–635 (TPPESHWKTYLDAKKRKFYVNHVTKETRWTKPDT). The interval 633 to 659 (PDTLNNNHIEPETPVHKRLSDRSASPR) is disordered. Residues 641–653 (IEPETPVHKRLSD) are compositionally biased toward basic and acidic residues. The region spanning 745–777 (QPLPSGWECITMNNRTVFLNHANKETSFYDPRI) is the WW 2 domain. One can recognise an HECT domain in the interval 914–1247 (DPFVLKKSRL…IVNGMSYSIE (334 aa)). The active-site Glycyl thioester intermediate is the cysteine 1215.

In terms of tissue distribution, expressed in the nervous system throughout the body. In the anterior ganglion, expression is limited to the two lateral outer labial neurons OLLL and OLLR.

Its subcellular location is the cytoplasm. The enzyme catalyses S-ubiquitinyl-[E2 ubiquitin-conjugating enzyme]-L-cysteine + [acceptor protein]-L-lysine = [E2 ubiquitin-conjugating enzyme]-L-cysteine + N(6)-ubiquitinyl-[acceptor protein]-L-lysine.. It participates in protein modification; protein ubiquitination. Functionally, E3 ubiquitin-protein ligase. Functions in the OLL neurons in the anterior ganglion to inhibit avoidance to microbial pathogens such as P.aeruginosa although worms do display avoidance behavior, vacating a P.aeruginosa lawn within 24 hours. Likely to act by inhibiting the neuropeptide receptor npr-1. The chain is E3 ubiquitin-protein ligase hecw-1 from Caenorhabditis elegans.